A 264-amino-acid chain; its full sequence is 3-methyl-2-oxobutanoate hydroxymethyltransferase (264 aa).

2 residues coordinate Mg(2+): Asp-45 and Asp-84. 3-methyl-2-oxobutanoate contacts are provided by residues Asp-45–Ser-46, Asp-84, and Lys-112. Glu-114 lines the Mg(2+) pocket. Glu-181 functions as the Proton acceptor in the catalytic mechanism.

It belongs to the PanB family. In terms of assembly, homodecamer; pentamer of dimers. Mg(2+) is required as a cofactor.

The protein localises to the cytoplasm. The enzyme catalyses 3-methyl-2-oxobutanoate + (6R)-5,10-methylene-5,6,7,8-tetrahydrofolate + H2O = 2-dehydropantoate + (6S)-5,6,7,8-tetrahydrofolate. The protein operates within cofactor biosynthesis; (R)-pantothenate biosynthesis; (R)-pantoate from 3-methyl-2-oxobutanoate: step 1/2. Functionally, catalyzes the reversible reaction in which hydroxymethyl group from 5,10-methylenetetrahydrofolate is transferred onto alpha-ketoisovalerate to form ketopantoate. This Vibrio cholerae serotype O1 (strain ATCC 39541 / Classical Ogawa 395 / O395) protein is 3-methyl-2-oxobutanoate hydroxymethyltransferase.